The primary structure comprises 338 residues: P2Y purinoceptor 14 (338 aa).

Residues M1–Y29 lie on the Extracellular side of the membrane. N-linked (GlcNAc...) asparagine glycans are attached at residues N2 and N3. The chain crosses the membrane as a helical span at residues G30–V50. At P51–S55 the chain is on the cytoplasmic side. The chain crosses the membrane as a helical span at residues F56–F76. Residues K77–V96 are Extracellular-facing. A disulfide bridge links C94 with C172. Residues S97 to F117 traverse the membrane as a helical segment. At D118–K139 the chain is on the cytoplasmic side. Residues L140–T160 traverse the membrane as a helical segment. Residues N161 to N188 are Extracellular-facing. Residues Y189–I209 form a helical membrane-spanning segment. Residues T210–N234 are Cytoplasmic-facing. A helical transmembrane segment spans residues I235 to P255. Topologically, residues Y256–E278 are extracellular. A helical transmembrane segment spans residues F279–C299. Residues Q300–L338 lie on the Cytoplasmic side of the membrane.

Belongs to the G-protein coupled receptor 1 family.

It localises to the cell membrane. Receptor for UDP-glucose coupled to G-proteins. This is P2Y purinoceptor 14 (P2ry14) from Mus musculus (Mouse).